Reading from the N-terminus, the 391-residue chain is Phosphoprotein (391 aa).

Phosphothreonine occurs at positions 10 and 16. Residues 54–65 show a composition bias toward polar residues; it reads QKNIQHPTASHQ. 2 disordered regions span residues 54–97 and 148–185; these read QKNI…PEPL and PVTEFKRGGPGAAAQGQTIQEEGIDGNGASAGSKERSG. The residue at position 69 (Ser-69) is a Phosphoserine. 3 positions are modified to phosphothreonine: Thr-91, Thr-150, and Thr-165. Position 188 is a phosphoserine (Ser-188). Residues 216–279 are multimerization; sequence ISANEIMDLL…MATVKIMDPG (64 aa). Residues 218–245 are a coiled coil; the sequence is ANEIMDLLRGMDARLQHLEQKVDKVLAQ. Phosphothreonine is present on Thr-250. A Phosphoserine modification is found at Ser-257. Thr-258 and Thr-282 each carry phosphothreonine. 2 positions are modified to phosphoserine: Ser-292 and Ser-294. Thr-298 is modified (phosphothreonine). Residues Ser-301 and Ser-374 each carry the phosphoserine modification. The interval 343–391 is interaction with the nucleoprotein; sequence AGRKVMITKMITDCVANPQMKQAFEQRLAKASTEDALNDIKRDIIRSAI. Thr-375 is modified (phosphothreonine).

Belongs to the rubulavirus/avulavirus P protein family. Homotetramer. Interacts (via multimerization domain) with polymerase L; this interaction forms the polymerase L-P complex. Interacts (via N-terminus) with N0 (via Ncore); this interaction allows P to chaperon N0 to avoid N polymerization before encapsidation. Interacts (via C-terminus) with N-RNA template; this interaction positions the polymerase on the template for both transcription and replication. Interacts with host RPS6KB1 kinase; this interaction may play a role in the viral replication and transcription.

Functionally, essential cofactor of the RNA polymerase L that plays a central role in the transcription and replication by forming the polymerase complex with RNA polymerase L and recruiting L to the genomic N-RNA template for RNA synthesis. Also plays a central role in the encapsidation of nascent RNA chains by forming the encapsidation complex with the nucleocapsid protein N (N-P complex). Acts as a chaperone for newly synthesized free N protein, so-called N0, allowing encapsidation of nascent RNA chains during replication. The nucleoprotein protein N prevents excessive phosphorylation of P, which leads to down-regulation of viral transcription/ replication. Participates, together with N, in the formation of viral factories (viroplasms), which are large inclusions in the host cytoplasm where replication takes place. The chain is Phosphoprotein (P/V) from Homo sapiens (Human).